The sequence spans 302 residues: Deoxyribonuclease-1-like 1 (302 aa).

The first 18 residues, M1–A18, serve as a signal peptide directing secretion. Catalysis depends on residues E97 and H148. Residues C187 and C224 are joined by a disulfide bond. A glycan (N-linked (GlcNAc...) asparagine) is linked at N261.

It belongs to the DNase I family. Highest levels in skeletal and cardiac muscles. Detectable in all other tissues tested except brain.

Its subcellular location is the endoplasmic reticulum. The protein is Deoxyribonuclease-1-like 1 (DNASE1L1) of Homo sapiens (Human).